The following is a 303-amino-acid chain: MQKFDTRTFQGLILTLQDYWARQGCTIVQPLDMEVGAGTSHPMTCLRALGPEPMATAYVQPSRRPTDGRYGENPNRLQHYYQFQVVIKPSPDNIQELYLGSLKELGMDPTIHDIRFVEDNWENPTLGAWGLGWEVWLNGMEVTQFTYFQQVGGLECKPVTGEITYGLERLAMYIQGVDSVYDLVWSDGPLGKTTYGDVFHQNEVEQSTYNFEYADVDFLFTCFEQYEKEAQQLLALENPLPLPAYERILKAAHSFNLLDARKAISVTERQRYILRIRTLTKAVAEAYYASREALGFPMCNKDK.

The protein belongs to the class-II aminoacyl-tRNA synthetase family. Tetramer of two alpha and two beta subunits.

It is found in the cytoplasm. It catalyses the reaction tRNA(Gly) + glycine + ATP = glycyl-tRNA(Gly) + AMP + diphosphate. The chain is Glycine--tRNA ligase alpha subunit from Salmonella agona (strain SL483).